Reading from the N-terminus, the 341-residue chain is UDP-N-acetylenolpyruvoylglucosamine reductase (341 aa).

Positions 12-182 (LSAYAKRLDI…ISVGLLLKKN (171 aa)) constitute an FAD-binding PCMH-type domain. Arg-158 is a catalytic residue. Ser-228 serves as the catalytic Proton donor. Glu-324 is an active-site residue.

The protein belongs to the MurB family. It depends on FAD as a cofactor.

The protein localises to the cytoplasm. The catalysed reaction is UDP-N-acetyl-alpha-D-muramate + NADP(+) = UDP-N-acetyl-3-O-(1-carboxyvinyl)-alpha-D-glucosamine + NADPH + H(+). The protein operates within cell wall biogenesis; peptidoglycan biosynthesis. In terms of biological role, cell wall formation. The chain is UDP-N-acetylenolpyruvoylglucosamine reductase from Photorhabdus laumondii subsp. laumondii (strain DSM 15139 / CIP 105565 / TT01) (Photorhabdus luminescens subsp. laumondii).